A 362-amino-acid chain; its full sequence is 3-dehydroquinate synthase (362 aa).

Residues 71 to 76 (DGEQYK), 105 to 109 (GVVGD), 129 to 130 (TT), lysine 142, lysine 151, and 169 to 172 (CLKT) each bind NAD(+). Residues glutamate 184, histidine 247, and histidine 264 each coordinate Zn(2+).

This sequence belongs to the sugar phosphate cyclases superfamily. Dehydroquinate synthase family. NAD(+) is required as a cofactor. The cofactor is Co(2+). It depends on Zn(2+) as a cofactor.

It is found in the cytoplasm. The enzyme catalyses 7-phospho-2-dehydro-3-deoxy-D-arabino-heptonate = 3-dehydroquinate + phosphate. The protein operates within metabolic intermediate biosynthesis; chorismate biosynthesis; chorismate from D-erythrose 4-phosphate and phosphoenolpyruvate: step 2/7. Functionally, catalyzes the conversion of 3-deoxy-D-arabino-heptulosonate 7-phosphate (DAHP) to dehydroquinate (DHQ). The protein is 3-dehydroquinate synthase of Shigella flexneri.